We begin with the raw amino-acid sequence, 295 residues long: Small ribosomal subunit protein uS2 (295 aa).

S2 carries the post-translational modification N-acetylserine. A Phosphoserine modification is found at S43. K52 is subject to N6-acetyllysine. The interaction with PPP1R16B stretch occupies residues 54–113 (TWEKLLLAARAIVAIENPADVSVISSRNTGQRAVLKFAAATGATPIAGRFTPGTFTNQIQ). K89 is modified (N6-acetyllysine; alternate). A Glycyl lysine isopeptide (Lys-Gly) (interchain with G-Cter in SUMO2); alternate cross-link involves residue K89. T97 bears the Phosphothreonine mark. Laminin-binding regions lie at residues 161–180 (IPCN…MLAR) and 205–229 (RDPE…EFQG). 5 [DE]-W-[ST] repeats span residues 230–232 (EWT), 247–249 (DWS), 266–268 (DWS), 275–277 (DWS), and 293–295 (EWS). The laminin-binding stretch occupies residues 242 to 295 (QPEVADWSEGVQVPSVPIQQFPTEDWSAQPATEDWSAAPTAQATEWVGATTEWS). A disordered region spans residues 266 to 295 (DWSAQPATEDWSAAPTAQATEWVGATTEWS).

This sequence belongs to the universal ribosomal protein uS2 family. Monomer (37LRP) and homodimer (67LR). Component of the small ribosomal subunit. Mature ribosomes consist of a small (40S) and a large (60S) subunit. The 40S subunit contains about 33 different proteins and 1 molecule of RNA (18S). The 60S subunit contains about 49 different proteins and 3 molecules of RNA (28S, 5.8S and 5S). Interacts with RPS21. Interacts with several laminins including at least LAMB1. Interacts with MDK. The mature dimeric form interacts with PPP1R16B (via its fourth ankyrin repeat). Interacts with PPP1CA only in the presence of PPP1R16B. Acylated. Acylation may be a prerequisite for conversion of the monomeric 37 kDa laminin receptor precursor (37LRP) to the mature dimeric 67 kDa laminin receptor (67LR), and may provide a mechanism for membrane association. Post-translationally, cleaved by stromelysin-3 (ST3) at the cell surface. Cleavage by stromelysin-3 may be a mechanism to alter cell-extracellular matrix interactions.

It is found in the cell membrane. It localises to the cytoplasm. The protein resides in the nucleus. In terms of biological role, required for the assembly and/or stability of the 40S ribosomal subunit. Required for the processing of the 20S rRNA-precursor to mature 18S rRNA in a late step of the maturation of 40S ribosomal subunits. Also functions as a cell surface receptor for laminin. Plays a role in cell adhesion to the basement membrane and in the consequent activation of signaling transduction pathways. May play a role in cell fate determination and tissue morphogenesis. Also acts as a receptor for several other ligands, including the pathogenic prion protein, viruses, and bacteria. Acts as a PPP1R16B-dependent substrate of PPP1CA. This is Small ribosomal subunit protein uS2 from Chlorocebus aethiops (Green monkey).